Here is a 633-residue protein sequence, read N- to C-terminus: uncharacterized protein (633 aa).

Residues 12–43 (ESGTNNYSDTIANGNTLPPRSKKGHSGRRKRS) form a disordered region. The segment covering 13–29 (SGTNNYSDTIANGNTLP) has biased composition (polar residues). A compositionally biased stretch (basic residues) spans 31-42 (RSKKGHSGRRKR). 2 helical membrane passes run 99–118 (ILFG…SSAL) and 217–233 (NCAF…ITAC). Residues 593-612 (DAETNKATGSAKSENIETKS) are disordered.

The protein resides in the membrane. This is an uncharacterized protein from Saccharomyces cerevisiae (strain ATCC 204508 / S288c) (Baker's yeast).